The chain runs to 355 residues: UDP-glucose 4-epimerase uge1 (355 aa).

8–39 serves as a coordination point for NAD(+); it reads TVLVTGGAGYIGSHTCVVLLEKGYDVVIVDNL.

Belongs to the NAD(P)-dependent epimerase/dehydratase family. It depends on NAD(+) as a cofactor.

The enzyme catalyses UDP-alpha-D-glucose = UDP-alpha-D-galactose. It functions in the pathway carbohydrate metabolism; galactose metabolism. In terms of biological role, major UDP-glucose/-galactose 4-epimerase under glucose-rich conditions involved in protein galactosylation. This Schizosaccharomyces pombe (strain 972 / ATCC 24843) (Fission yeast) protein is UDP-glucose 4-epimerase uge1 (uge1).